A 608-amino-acid polypeptide reads, in one-letter code: DNA ligase (608 aa).

E266 lines the ATP pocket. Residue K268 is the N6-AMP-lysine intermediate of the active site. Positions 273, 288, 318, 358, 435, and 441 each coordinate ATP.

Belongs to the ATP-dependent DNA ligase family. Requires Mg(2+) as cofactor. The cofactor is Mn(2+).

The catalysed reaction is ATP + (deoxyribonucleotide)n-3'-hydroxyl + 5'-phospho-(deoxyribonucleotide)m = (deoxyribonucleotide)n+m + AMP + diphosphate.. It catalyses the reaction ADP + (deoxyribonucleotide)n-3'-hydroxyl + 5'-phospho-(deoxyribonucleotide)m = (deoxyribonucleotide)n+m + AMP + phosphate.. The enzyme catalyses GTP + (deoxyribonucleotide)n-3'-hydroxyl + 5'-phospho-(deoxyribonucleotide)m = (deoxyribonucleotide)n+m + GMP + diphosphate.. DNA ligase that seals nicks in double-stranded DNA during DNA replication, DNA recombination and DNA repair. Can use ATP, ADP and GTP, but not CTP, TTP or NAD(+). The chain is DNA ligase from Hyperthermus butylicus (strain DSM 5456 / JCM 9403 / PLM1-5).